Consider the following 187-residue polypeptide: Orotate phosphoribosyltransferase (187 aa).

5-phospho-alpha-D-ribose 1-diphosphate contacts are provided by residues Arg98, Lys99, Lys102, His104, and 128 to 136 (EDVTTTGGS). Orotate-binding residues include Thr132 and Arg160.

It belongs to the purine/pyrimidine phosphoribosyltransferase family. PyrE subfamily. As to quaternary structure, homodimer. It depends on Mg(2+) as a cofactor.

It catalyses the reaction orotidine 5'-phosphate + diphosphate = orotate + 5-phospho-alpha-D-ribose 1-diphosphate. It participates in pyrimidine metabolism; UMP biosynthesis via de novo pathway; UMP from orotate: step 1/2. In terms of biological role, catalyzes the transfer of a ribosyl phosphate group from 5-phosphoribose 1-diphosphate to orotate, leading to the formation of orotidine monophosphate (OMP). In Rhodopseudomonas palustris (strain ATCC BAA-98 / CGA009), this protein is Orotate phosphoribosyltransferase.